Here is a 423-residue protein sequence, read N- to C-terminus: Dihydroorotase-like protein (423 aa).

This sequence belongs to the metallo-dependent hydrolases superfamily. DHOase family. PyrC' subfamily. As to quaternary structure, heterododecamer of 6 active PyrB subunits and 6 non-catalytic PyrC' subunits.

Functionally, non-functional DHOase. The polypeptide is Dihydroorotase-like protein (pyrC') (Pseudomonas aeruginosa (strain ATCC 15692 / DSM 22644 / CIP 104116 / JCM 14847 / LMG 12228 / 1C / PRS 101 / PAO1)).